A 235-amino-acid chain; its full sequence is 7-cyano-7-deazaguanine synthase (235 aa).

13–23 (FSGGLDSTTCL) contributes to the ATP binding site. Positions 197, 207, 210, and 213 each coordinate Zn(2+).

This sequence belongs to the QueC family. The cofactor is Zn(2+).

The catalysed reaction is 7-carboxy-7-deazaguanine + NH4(+) + ATP = 7-cyano-7-deazaguanine + ADP + phosphate + H2O + H(+). It participates in purine metabolism; 7-cyano-7-deazaguanine biosynthesis. Its function is as follows. Catalyzes the ATP-dependent conversion of 7-carboxy-7-deazaguanine (CDG) to 7-cyano-7-deazaguanine (preQ(0)). This is 7-cyano-7-deazaguanine synthase from Solidesulfovibrio magneticus (strain ATCC 700980 / DSM 13731 / RS-1) (Desulfovibrio magneticus).